We begin with the raw amino-acid sequence, 302 residues long: Phosphoribosylaminoimidazole-succinocarboxamide synthase (302 aa).

Belongs to the SAICAR synthetase family.

It catalyses the reaction 5-amino-1-(5-phospho-D-ribosyl)imidazole-4-carboxylate + L-aspartate + ATP = (2S)-2-[5-amino-1-(5-phospho-beta-D-ribosyl)imidazole-4-carboxamido]succinate + ADP + phosphate + 2 H(+). It participates in purine metabolism; IMP biosynthesis via de novo pathway; 5-amino-1-(5-phospho-D-ribosyl)imidazole-4-carboxamide from 5-amino-1-(5-phospho-D-ribosyl)imidazole-4-carboxylate: step 1/2. This chain is Phosphoribosylaminoimidazole-succinocarboxamide synthase, found in Cupriavidus taiwanensis (strain DSM 17343 / BCRC 17206 / CCUG 44338 / CIP 107171 / LMG 19424 / R1) (Ralstonia taiwanensis (strain LMG 19424)).